We begin with the raw amino-acid sequence, 298 residues long: (DL)-glycerol-3-phosphatase 1, mitochondrial (298 aa).

Residues 1 to 46 constitute a mitochondrion transit peptide; sequence MLTTPTRFVALRIPFRSSNKIPISIAPSPKVFPRKPVIRVPASLRF. Residue Asp-77 is the Nucleophile of the active site. Mg(2+) is bound by residues Asp-77, Asp-79, and Asp-242. The active-site Proton donor is the Asp-79.

This sequence belongs to the HAD-like hydrolase superfamily. DOG/GPP family. It depends on Mg(2+) as a cofactor. Ubiquitous with highest expression in siliques. Mainly restricted to the meristem of immature flower and vascular elements of the root, shoot, leave, siliqua and developing embryo (at the protein level).

It is found in the mitochondrion. The catalysed reaction is sn-glycerol 1-phosphate + H2O = glycerol + phosphate. The enzyme catalyses sn-glycerol 3-phosphate + H2O = glycerol + phosphate. It carries out the reaction 5-amino-6-(5-phospho-D-ribitylamino)uracil + H2O = 5-amino-6-(D-ribitylamino)uracil + phosphate. In terms of biological role, acts as a glycerol-3-phosphatase with higher stereospecificity for L-glycerol-3-phosphate than DL-glycerol-3-phosphate. Can also dephosphorylate in vitro 5-amino-6-(5-phospho-D-ribitylamino)uracil, also known as ARPP. The sequence is that of (DL)-glycerol-3-phosphatase 1, mitochondrial from Arabidopsis thaliana (Mouse-ear cress).